The chain runs to 533 residues: Bifunctional purine biosynthesis protein PurH (533 aa).

One can recognise an MGS-like domain in the interval 1–148 (MDTPRPIKRA…KNHKDVTIVV (148 aa)).

It belongs to the PurH family.

The catalysed reaction is (6R)-10-formyltetrahydrofolate + 5-amino-1-(5-phospho-beta-D-ribosyl)imidazole-4-carboxamide = 5-formamido-1-(5-phospho-D-ribosyl)imidazole-4-carboxamide + (6S)-5,6,7,8-tetrahydrofolate. It catalyses the reaction IMP + H2O = 5-formamido-1-(5-phospho-D-ribosyl)imidazole-4-carboxamide. The protein operates within purine metabolism; IMP biosynthesis via de novo pathway; 5-formamido-1-(5-phospho-D-ribosyl)imidazole-4-carboxamide from 5-amino-1-(5-phospho-D-ribosyl)imidazole-4-carboxamide (10-formyl THF route): step 1/1. Its pathway is purine metabolism; IMP biosynthesis via de novo pathway; IMP from 5-formamido-1-(5-phospho-D-ribosyl)imidazole-4-carboxamide: step 1/1. The chain is Bifunctional purine biosynthesis protein PurH from Colwellia psychrerythraea (strain 34H / ATCC BAA-681) (Vibrio psychroerythus).